A 106-amino-acid polypeptide reads, in one-letter code: Colipase A (106 aa).

The first 11 residues, 1-11, serve as a signal peptide directing secretion; the sequence is LLLVALAVAYA. Residues 12-16 constitute a propeptide, enterostatin, activation peptide; the sequence is VPDPR. Disulfide bonds link Cys-28–Cys-39, Cys-34–Cys-50, Cys-38–Cys-72, Cys-60–Cys-80, and Cys-74–Cys-98. Trp-63 is a taurodeoxycholate binding site.

It belongs to the colipase family. Forms a 1:1 stoichiometric complex with pancreatic lipase. In terms of tissue distribution, expressed by the pancreas.

It is found in the secreted. Its function is as follows. Colipase is a cofactor of pancreatic lipase. It allows the lipase to anchor itself to the lipid-water interface. Without colipase the enzyme is washed off by bile salts, which have an inhibitory effect on the lipase. Functionally, enterostatin has a biological activity as a satiety signal. This chain is Colipase A (CLPS1), found in Equus caballus (Horse).